A 417-amino-acid chain; its full sequence is Cysteate synthase (417 aa).

Position 102 is an N6-(pyridoxal phosphate)lysine (Lys102). Pyridoxal 5'-phosphate-binding residues include Asn128 and Thr380.

Belongs to the threonine synthase family. Cysteate synthase subfamily. In terms of assembly, homotrimer. Requires pyridoxal 5'-phosphate as cofactor.

It catalyses the reaction O-phospho-L-serine + sulfite + H(+) = L-cysteate + phosphate. The protein operates within cofactor biosynthesis; coenzyme M biosynthesis. Specifically catalyzes the beta-elimination of phosphate from L-phosphoserine and the beta-addition of sulfite to the dehydroalanine intermediate to produce L-cysteate. The chain is Cysteate synthase from Methanocella arvoryzae (strain DSM 22066 / NBRC 105507 / MRE50).